The primary structure comprises 299 residues: Ribosomal protein uL3 glutamine methyltransferase (299 aa).

This sequence belongs to the protein N5-glutamine methyltransferase family. PrmB subfamily.

It catalyses the reaction L-glutaminyl-[ribosomal protein uL3] + S-adenosyl-L-methionine = N(5)-methyl-L-glutaminyl-[ribosomal protein uL3] + S-adenosyl-L-homocysteine + H(+). Methylates large ribosomal subunit protein uL3 on a specific glutamine residue. In Neisseria gonorrhoeae (strain ATCC 700825 / FA 1090), this protein is Ribosomal protein uL3 glutamine methyltransferase.